The following is a 288-amino-acid chain: Lipoyl synthase (288 aa).

7 residues coordinate [4Fe-4S] cluster: Cys-39, Cys-44, Cys-50, Cys-65, Cys-69, Cys-72, and Ser-276. One can recognise a Radical SAM core domain in the interval 51–265; sequence WGKGTATFMI…KETGLKKGFE (215 aa).

This sequence belongs to the radical SAM superfamily. Lipoyl synthase family. The cofactor is [4Fe-4S] cluster.

It is found in the cytoplasm. It catalyses the reaction [[Fe-S] cluster scaffold protein carrying a second [4Fe-4S](2+) cluster] + N(6)-octanoyl-L-lysyl-[protein] + 2 oxidized [2Fe-2S]-[ferredoxin] + 2 S-adenosyl-L-methionine + 4 H(+) = [[Fe-S] cluster scaffold protein] + N(6)-[(R)-dihydrolipoyl]-L-lysyl-[protein] + 4 Fe(3+) + 2 hydrogen sulfide + 2 5'-deoxyadenosine + 2 L-methionine + 2 reduced [2Fe-2S]-[ferredoxin]. Its pathway is protein modification; protein lipoylation via endogenous pathway; protein N(6)-(lipoyl)lysine from octanoyl-[acyl-carrier-protein]: step 2/2. Its function is as follows. Catalyzes the radical-mediated insertion of two sulfur atoms into the C-6 and C-8 positions of the octanoyl moiety bound to the lipoyl domains of lipoate-dependent enzymes, thereby converting the octanoylated domains into lipoylated derivatives. The sequence is that of Lipoyl synthase from Bacteroides fragilis (strain YCH46).